We begin with the raw amino-acid sequence, 179 residues long: Large ribosomal subunit protein uL5 (179 aa).

Belongs to the universal ribosomal protein uL5 family. As to quaternary structure, part of the 50S ribosomal subunit; part of the 5S rRNA/L5/L18/L25 subcomplex. Contacts the 5S rRNA and the P site tRNA. Forms a bridge to the 30S subunit in the 70S ribosome.

Functionally, this is one of the proteins that bind and probably mediate the attachment of the 5S RNA into the large ribosomal subunit, where it forms part of the central protuberance. In the 70S ribosome it contacts protein S13 of the 30S subunit (bridge B1b), connecting the 2 subunits; this bridge is implicated in subunit movement. Contacts the P site tRNA; the 5S rRNA and some of its associated proteins might help stabilize positioning of ribosome-bound tRNAs. The sequence is that of Large ribosomal subunit protein uL5 from Shewanella piezotolerans (strain WP3 / JCM 13877).